The sequence spans 157 residues: Large ribosomal subunit protein eL24 (157 aa).

A disordered region spans residues 94–157; sequence RNQKPEVRKA…ISAPRVGGKR (64 aa). Residues 96 to 117 are compositionally biased toward basic and acidic residues; the sequence is QKPEVRKAQREQAIRAAKESKK. The span at 123-140 shows a compositional bias: low complexity; the sequence is KKPAAASAKTSAKTAQKP.

This sequence belongs to the eukaryotic ribosomal protein eL24 family. Component of the large ribosomal subunit.

The protein localises to the cytoplasm. Component of the large ribosomal subunit. The ribosome is a large ribonucleoprotein complex responsible for the synthesis of proteins in the cell. This Gillichthys mirabilis (Long-jawed mudsucker) protein is Large ribosomal subunit protein eL24 (rpl24).